The sequence spans 220 residues: Adenylate kinase (220 aa).

10-15 contributes to the ATP binding site; the sequence is GAGKGT. An NMP region spans residues 30–59; that stretch reads STGDMLRAAVKAGSPLGVEAKGYMDAGKLV. AMP-binding positions include T31, R36, 57-59, 85-88, and Q92; these read KLV and GFPR. The interval 122-159 is LID; it reads GRRTHPASGRTYHVKFNPPKVEGKDDVTGEPLIQRDDD. ATP-binding positions include R123 and 132–133; that span reads TY. Residues R156 and R167 each coordinate AMP. ATP is bound at residue G206.

It belongs to the adenylate kinase family. In terms of assembly, monomer.

Its subcellular location is the cytoplasm. It catalyses the reaction AMP + ATP = 2 ADP. Its pathway is purine metabolism; AMP biosynthesis via salvage pathway; AMP from ADP: step 1/1. Catalyzes the reversible transfer of the terminal phosphate group between ATP and AMP. Plays an important role in cellular energy homeostasis and in adenine nucleotide metabolism. This chain is Adenylate kinase, found in Burkholderia ambifaria (strain ATCC BAA-244 / DSM 16087 / CCUG 44356 / LMG 19182 / AMMD) (Burkholderia cepacia (strain AMMD)).